The following is a 313-amino-acid chain: MSHSRHRAEAPPLQREDSGTFSLGKMITAKPGKTPIQVLHEYGMKTKNIPVYECERSDVQVHVPTFTFRVTVGDITCTGEGTSKKLAKHRAAEAAINILKANASICFAVPDPLMPDPSKQPKNQLNPIGSLQELAIHHGWRLPEYTLSQEGGPAHKREYTTICRLESFMETGKGASKKQAKRNAAEKFLAKFSNISPENHISLTNVVGHSLGCTWHSLRNSPGEKINLLKRSLLSLPNTDYIQLLSEIASEQGFNITYLDIEELSANGQYQCLAELSTSPITVCHGSGISCGNAQSDAAHNALQYLKIIAERK.

The interval methionine 1–threonine 20 is disordered. Sufficient for self-association and interaction with TARBP2 regions lie at residues methionine 1 to alanine 103, asparagine 102 to isoleucine 195, and isoleucine 195 to lysine 313. Position 18 is a phosphoserine (serine 18). DRBM domains lie at threonine 34 to alanine 101, asparagine 126 to asparagine 194, and aspartate 240 to isoleucine 308. Phosphoserine is present on residues serine 167, serine 246, and serine 287.

The protein belongs to the PRKRA family. As to quaternary structure, homodimer. Interacts with DICER1, AGO2 and TARBP2. Also able to interact with dsRNA. Interacts with EIF2AK2/PKR through its DRBM domains. Interacts with DUS2L (via DRBM domain). Interacts with UBC9. Forms a complex with UBC9 and p53/TP53. In terms of processing, phosphorylated at Ser-246 in unstressed cells and at Ser-287 in stressed cells. Phosphorylation at Ser-246 appears to be a prerequisite for subsequent phosphorylation at Ser-287. Phosphorylation at Ser-246 and Ser-287 are necessary for activation of EIF2AK2/PKR under conditions of stress. Expressed in brain, heart, kidney, liver, lung, muscle, spleen and testis.

Its subcellular location is the cytoplasm. It localises to the perinuclear region. Its function is as follows. Required for siRNA production by DICER1 and for subsequent siRNA-mediated post-transcriptional gene silencing. Does not seem to be required for processing of pre-miRNA to miRNA by DICER1. Activates EIF2AK2/PKR in the absence of double-stranded RNA (dsRNA), leading to phosphorylation of EIF2S1/EFI2-alpha and inhibition of translation and induction of apoptosis. Promotes UBC9-p53/TP53 association and sumoylation and phosphorylation of p53/TP53 at 'Lys-386' at 'Ser-392' respectively and enhances its activity in a EIF2AK2/PKR-dependent manner. The chain is Interferon-inducible double-stranded RNA-dependent protein kinase activator A (Prkra) from Mus musculus (Mouse).